The chain runs to 330 residues: D-lactate dehydrogenase (330 aa).

NAD(+) is bound by residues 156–157, aspartate 176, 206–207, 233–235, and aspartate 259; these read RI, VP, and AAR. Arginine 235 is a catalytic residue. Glutamate 264 is a catalytic residue. The Proton donor role is filled by histidine 296.

Belongs to the D-isomer specific 2-hydroxyacid dehydrogenase family.

It catalyses the reaction (R)-lactate + NAD(+) = pyruvate + NADH + H(+). This chain is D-lactate dehydrogenase (ldhD), found in Staphylococcus epidermidis (strain ATCC 35984 / DSM 28319 / BCRC 17069 / CCUG 31568 / BM 3577 / RP62A).